The chain runs to 349 residues: Cobalt-precorrin-5B C(1)-methyltransferase (349 aa).

Belongs to the CbiD family.

The enzyme catalyses Co-precorrin-5B + S-adenosyl-L-methionine = Co-precorrin-6A + S-adenosyl-L-homocysteine. It participates in cofactor biosynthesis; adenosylcobalamin biosynthesis; cob(II)yrinate a,c-diamide from sirohydrochlorin (anaerobic route): step 6/10. Catalyzes the methylation of C-1 in cobalt-precorrin-5B to form cobalt-precorrin-6A. This Saccharolobus islandicus (strain M.16.27) (Sulfolobus islandicus) protein is Cobalt-precorrin-5B C(1)-methyltransferase.